A 24-amino-acid polypeptide reads, in one-letter code: Brevinin-1CSa (24 aa).

Cys-18 and Cys-24 are oxidised to a cystine.

Expressed by the skin glands.

It is found in the secreted. The protein resides in the target cell membrane. In terms of biological role, antibacterial peptide. Has activity against the Gram-positive bacterium S.aureus (MIC=2 uM) and the Gram-negative bacterium E.coli (MIC=32 uM). Has a strong hemolytic activity (LC(50)=5 uM). This Rana cascadae (Cascades frog) protein is Brevinin-1CSa.